The chain runs to 1342 residues: DNA-directed RNA polymerase subunit beta (1342 aa).

The protein belongs to the RNA polymerase beta chain family. In terms of assembly, the RNAP catalytic core consists of 2 alpha, 1 beta, 1 beta' and 1 omega subunit. When a sigma factor is associated with the core the holoenzyme is formed, which can initiate transcription.

It catalyses the reaction RNA(n) + a ribonucleoside 5'-triphosphate = RNA(n+1) + diphosphate. DNA-dependent RNA polymerase catalyzes the transcription of DNA into RNA using the four ribonucleoside triphosphates as substrates. This chain is DNA-directed RNA polymerase subunit beta, found in Enterobacter sp. (strain 638).